Reading from the N-terminus, the 456-residue chain is tRNA modification GTPase MnmE (456 aa).

Residues R24, E81, and K120 each coordinate (6S)-5-formyl-5,6,7,8-tetrahydrofolate. One can recognise a TrmE-type G domain in the interval 216-379 (GMKVVIAGRP…LREHLKECIG (164 aa)). N226 contacts K(+). Residues 226 to 231 (NAGKSS), 245 to 251 (TAIEGTT), and 270 to 273 (DTAG) contribute to the GTP site. S230 is a Mg(2+) binding site. The K(+) site is built by T245, I247, and T250. Position 251 (T251) interacts with Mg(2+). K456 serves as a coordination point for (6S)-5-formyl-5,6,7,8-tetrahydrofolate.

It belongs to the TRAFAC class TrmE-Era-EngA-EngB-Septin-like GTPase superfamily. TrmE GTPase family. As to quaternary structure, homodimer. Heterotetramer of two MnmE and two MnmG subunits. It depends on K(+) as a cofactor.

The protein localises to the cytoplasm. In terms of biological role, exhibits a very high intrinsic GTPase hydrolysis rate. Involved in the addition of a carboxymethylaminomethyl (cmnm) group at the wobble position (U34) of certain tRNAs, forming tRNA-cmnm(5)s(2)U34. The polypeptide is tRNA modification GTPase MnmE (Marinobacter nauticus (strain ATCC 700491 / DSM 11845 / VT8) (Marinobacter aquaeolei)).